The sequence spans 203 residues: Large ribosomal subunit protein uL13 (203 aa).

An N-acetylalanine modification is found at alanine 2. Arginine 59 is modified (citrulline). Serine 77 carries the phosphoserine; by ZIPK/DAPK3 modification. Arginine 140 carries the post-translational modification Citrulline. Residue lysine 191 is modified to N6-acetyllysine.

Belongs to the universal ribosomal protein uL13 family. In terms of assembly, component of the 60S ribosome. Component of the GAIT complex. Interacts with EIF4G1. Post-translationally, phosphorylation at Ser-77 upon interferon-gamma treatment in monocytes involves a DAPK1-DAPK3 kinase cascade and is causing release from the ribosome, association with the GAIT complex and subsequent involvement in transcript-selective translation inhibition. In terms of processing, citrullinated by PADI4.

The protein resides in the cytoplasm. In terms of biological role, associated with ribosomes but is not required for canonical ribosome function and has extra-ribosomal functions. Component of the GAIT (gamma interferon-activated inhibitor of translation) complex which mediates interferon-gamma-induced transcript-selective translation inhibition in inflammation processes. Upon interferon-gamma activation and subsequent phosphorylation dissociates from the ribosome and assembles into the GAIT complex which binds to stem loop-containing GAIT elements in the 3'-UTR of diverse inflammatory mRNAs (such as ceruplasmin) and suppresses their translation. In the GAIT complex interacts with m7G cap-bound eIF4G at or near the eIF3-binding site and blocks the recruitment of the 43S ribosomal complex. Involved in methylation of rRNA. This is Large ribosomal subunit protein uL13 (RPL13A) from Homo sapiens (Human).